A 417-amino-acid polypeptide reads, in one-letter code: UDP-N-acetylglucosamine 1-carboxyvinyltransferase (417 aa).

22–23 (KN) serves as a coordination point for phosphoenolpyruvate. Arg-91 lines the UDP-N-acetyl-alpha-D-glucosamine pocket. Cys-115 acts as the Proton donor in catalysis. Position 115 is a 2-(S-cysteinyl)pyruvic acid O-phosphothioketal (Cys-115). UDP-N-acetyl-alpha-D-glucosamine-binding positions include 120 to 124 (RPVDL), Asp-304, and Ile-326.

Belongs to the EPSP synthase family. MurA subfamily.

The protein localises to the cytoplasm. The enzyme catalyses phosphoenolpyruvate + UDP-N-acetyl-alpha-D-glucosamine = UDP-N-acetyl-3-O-(1-carboxyvinyl)-alpha-D-glucosamine + phosphate. The protein operates within cell wall biogenesis; peptidoglycan biosynthesis. Its function is as follows. Cell wall formation. Adds enolpyruvyl to UDP-N-acetylglucosamine. The polypeptide is UDP-N-acetylglucosamine 1-carboxyvinyltransferase (Nitratidesulfovibrio vulgaris (strain ATCC 29579 / DSM 644 / CCUG 34227 / NCIMB 8303 / VKM B-1760 / Hildenborough) (Desulfovibrio vulgaris)).